Consider the following 269-residue polypeptide: Mitochondrial genome maintenance protein MGM101 (269 aa).

A mitochondrion-targeting transit peptide spans 1–30; sequence MKSIFKVRGCVSHAAQFCQKRTVVSTGTSN.

It belongs to the MGM101 family.

Its subcellular location is the mitochondrion matrix. The protein resides in the mitochondrion nucleoid. Performs an essential function in the repair of oxidatively damaged mtDNA that is required for the maintenance of the mitochondrial genome. Binds to DNA. The sequence is that of Mitochondrial genome maintenance protein MGM101 (MGM101) from Saccharomyces cerevisiae (strain ATCC 204508 / S288c) (Baker's yeast).